The primary structure comprises 680 residues: DNA-directed RNA polymerase subunit beta' (680 aa).

Positions 69, 71, 87, and 90 each coordinate Zn(2+). Mg(2+)-binding residues include D489, D491, and D493.

It belongs to the RNA polymerase beta' chain family. RpoC1 subfamily. In terms of assembly, in plastids the minimal PEP RNA polymerase catalytic core is composed of four subunits: alpha, beta, beta', and beta''. When a (nuclear-encoded) sigma factor is associated with the core the holoenzyme is formed, which can initiate transcription. Mg(2+) is required as a cofactor. Requires Zn(2+) as cofactor.

It is found in the plastid. Its subcellular location is the chloroplast. It catalyses the reaction RNA(n) + a ribonucleoside 5'-triphosphate = RNA(n+1) + diphosphate. In terms of biological role, DNA-dependent RNA polymerase catalyzes the transcription of DNA into RNA using the four ribonucleoside triphosphates as substrates. This Ceratophyllum demersum (Rigid hornwort) protein is DNA-directed RNA polymerase subunit beta'.